The chain runs to 418 residues: Putative methylthiotransferase HP_0285 (418 aa).

In terms of domain architecture, MTTase N-terminal spans 2-110; sequence KKVYFKTFGC…INALLQEKKR (109 aa). Positions 11, 45, 74, 144, 148, and 151 each coordinate [4Fe-4S] cluster. The Radical SAM core domain occupies 130 to 355; that stretch reads FVGKTRAFIK…KDLIFHKNKA (226 aa).

It belongs to the methylthiotransferase family. It depends on [4Fe-4S] cluster as a cofactor.

The polypeptide is Putative methylthiotransferase HP_0285 (Helicobacter pylori (strain ATCC 700392 / 26695) (Campylobacter pylori)).